Here is a 292-residue protein sequence, read N- to C-terminus: D-galactarolactone isomerase (292 aa).

The protein belongs to the metallo-dependent hydrolases superfamily. Does not require a metal cofactor. serves as cofactor.

It catalyses the reaction D-galactaro-1,5-lactone = D-galactaro-1,4-lactone. It participates in carbohydrate acid metabolism; D-galacturonate degradation via prokaryotic oxidative pathway. Functionally, catalyzes the isomerization of D-galactaro-1,5-lactone to D-galactaro-1,4-lactone. This is a step in the oxidative degradation pathway of D-galacturonate, which allows A.tumefaciens to utilize D-galacturonate as a sole carbon source. This is D-galactarolactone isomerase from Agrobacterium fabrum (strain C58 / ATCC 33970) (Agrobacterium tumefaciens (strain C58)).